The sequence spans 146 residues: Glycosylation-dependent cell adhesion molecule 1 (146 aa).

The first 19 residues, 1-19, serve as a signal peptide directing secretion; the sequence is MKFFTVLLFASLAATSLAA. The segment at 25–112 is disordered; that stretch reads DELHLRTQPT…SAATSEGKLT (88 aa). Over residues 48–60 the composition is skewed to basic and acidic residues; sequence ISKESTSSKDLSK. A phosphoserine mark is found at S54, S59, and S71. Polar residues predominate over residues 74–106; that stretch reads NVGTESTKPQSQEAQDGLRSGSSQQEETTSAAT.

Belongs to the PP3/GlyCAM-1 family. Post-translationally, extensively O-glycosylated. Lymph nodes. Associated with the lumenal surface of the high endothelial venules of peripheral lymph nodes.

The protein localises to the cell membrane. Adhesion molecule that accomplishes cell binding by presenting carbohydrate(s) to the lectin domain of L-selectin. This is Glycosylation-dependent cell adhesion molecule 1 (Glycam1) from Rattus norvegicus (Rat).